The sequence spans 93 residues: Small ribosomal subunit protein bS20 (93 aa).

This sequence belongs to the bacterial ribosomal protein bS20 family.

Its function is as follows. Binds directly to 16S ribosomal RNA. The chain is Small ribosomal subunit protein bS20 from Dictyoglomus turgidum (strain DSM 6724 / Z-1310).